Consider the following 246-residue polypeptide: MILFPAIDLKDGQCVRLEQGDMARATVFNFDPAEQARAFASQGFEYLHVVDLDGAFAGRPVNADAVERMLKNVAMPVQLGGGIRDLKTVEAWLKKGITRVIIGTAAVRDPVLVKEAAKAFPGRVAVGLDARDGKVAVEGWAETSEVTALDIARRFEDAGIAAIIFTDIARDGLLKGLNLDATIALADSISIPVIASGGFASIADVKALLAPRAKKLAGAIAGRALYDGRLDPAEALALIRAARAAA.

The active-site Proton acceptor is Asp-8. Asp-129 functions as the Proton donor in the catalytic mechanism.

Belongs to the HisA/HisF family.

It is found in the cytoplasm. It carries out the reaction 1-(5-phospho-beta-D-ribosyl)-5-[(5-phospho-beta-D-ribosylamino)methylideneamino]imidazole-4-carboxamide = 5-[(5-phospho-1-deoxy-D-ribulos-1-ylimino)methylamino]-1-(5-phospho-beta-D-ribosyl)imidazole-4-carboxamide. The protein operates within amino-acid biosynthesis; L-histidine biosynthesis; L-histidine from 5-phospho-alpha-D-ribose 1-diphosphate: step 4/9. The protein is 1-(5-phosphoribosyl)-5-[(5-phosphoribosylamino)methylideneamino] imidazole-4-carboxamide isomerase of Nitrobacter hamburgensis (strain DSM 10229 / NCIMB 13809 / X14).